Consider the following 559-residue polypeptide: ADP,ATP carrier protein 1 (559 aa).

The segment covering 1 to 10 has biased composition (polar residues); the sequence is MNEVENNNHS. A disordered region spans residues 1-22; that stretch reads MNEVENNNHSFPREDIPTEDEI. Residue asparagine 8 is glycosylated (N-linked (GlcNAc...) asparagine). 4 helical membrane-spanning segments follow: residues 46–66, 79–99, 111–131, and 174–194; these read FALL…MRIL, TILF…VFLI, IFSI…AVFL, and IVFI…FLSF. An N-linked (GlcNAc...) asparagine glycan is attached at asparagine 196. 2 helical membrane passes run 210–230 and 242–262; these read PLII…GAFF and QVLL…VIFL. Asparagine 290 carries an N-linked (GlcNAc...) asparagine glycan. The next 3 membrane-spanning stretches (helical) occupy residues 305–325, 354–373, and 377–397; these read LLLA…MVES, QYMT…SSYV, and GFLL…VLFL. N-linked (GlcNAc...) asparagine glycosylation is present at asparagine 403. 3 consecutive transmembrane segments (helical) span residues 425 to 447, 473 to 493, and 503 to 523; these read YVLE…YSAF, IFGK…FEAL, and PITA…IIYL.

This sequence belongs to the ADP/ATP translocase tlc family.

Its subcellular location is the cell membrane. In terms of biological role, ATP transporter involved in the uptake of ATP from the host cell cytoplasm. Provides the microsporidian cell with host ATP in exchange for ADP. This is an obligate exchange system. This energy acquiring activity is an important component of microsporidian parasitism. This is ADP,ATP carrier protein 1 (NTT1) from Encephalitozoon cuniculi (strain GB-M1) (Microsporidian parasite).